Reading from the N-terminus, the 831-residue chain is Isethionate sulfite-lyase (831 aa).

The PFL domain occupies 32-701; that stretch reads PRVFRLLERF…VVSATPNGRT (670 aa). 2-hydroxyethane-1-sulfonate contacts are provided by residues R189, Q193, 468-470, and R679; that span reads CTE. C468 acts as the Cysteine radical intermediate in catalysis. The active-site Proton acceptor is E470. A Glycine radical domain is found at 708–831; sequence DGSSASHGAD…LIARTEHDVM (124 aa). Glycine radical is present on G806.

It belongs to the glycyl radical enzyme (GRE) family. As to quaternary structure, homodimer. Requires the activating protein IslB to generate the key active site glycyl radical on Gly-806 that is involved in catalysis.

It carries out the reaction 2-hydroxyethane-1-sulfonate = acetaldehyde + sulfite + H(+). Its pathway is organosulfur degradation; alkanesulfonate degradation. Functionally, involved in an anaerobic respiration pathway that converts the sulfonate isethionate (2-hydroxyethanesulfonate) to ammonia, acetate and sulfide. Catalyzes the radical-mediated C-S bond cleavage of isethionate (2-hydroxyethanesulfonate) to form sulfite and acetaldehyde. The protein is Isethionate sulfite-lyase of Desulfovibrio desulfuricans (strain ATCC 27774 / DSM 6949 / MB).